A 751-amino-acid polypeptide reads, in one-letter code: Dual specificity tyrosine-phosphorylation-regulated kinase 1A (751 aa).

The segment covering 59-68 (YNDQIQQPLP) has biased composition (polar residues). 2 disordered regions span residues 59 to 81 (YNDQ…RDPA) and 104 to 129 (YAKK…KVYN). Positions 109 to 126 (RRHQQGQGDDSSHKKERK) match the Bipartite nuclear localization signal motif. Positions 151-471 (YEIDSLIGKG…PYYALQHSFF (321 aa)) constitute a Protein kinase domain. ATP-binding positions include 157 to 165 (IGKGSFGQV), Lys-180, and 230 to 233 (FEML). Residue Asp-279 is the Proton acceptor of the active site. Positions 477-493 (EGTNTSNSVSTSPAMEQ) are enriched in polar residues. Disordered regions lie at residues 477–532 (EGTN…HSGG), 580–667 (HVPS…GNQA), and 730–751 (GMDR…VASS). Over residues 494–517 (SQSSGTTSSTSSSSGGSSGTSNSG) the composition is skewed to low complexity. Residues 585 to 613 (QQNVPHHHGNGSHHHHHHHHHHHGQHVLS) are histidine-rich domain (HRD). A compositionally biased stretch (basic residues) spans 589–609 (PHHHGNGSHHHHHHHHHHHGQ). The segment covering 611–622 (VLSNRTRTRIYN) has biased composition (polar residues). Low complexity-rich tracts occupy residues 623 to 633 (SPSTSSSTQDS) and 642 to 660 (SMTS…SSST). Residues 742–751 (CVQQSPVASS) show a composition bias toward polar residues.

The protein belongs to the protein kinase superfamily. CMGC Ser/Thr protein kinase family. MNB/DYRK subfamily. Post-translationally, autophosphorylated on tyrosine residues.

Its subcellular location is the nucleus. It is found in the nucleus speckle. The catalysed reaction is L-seryl-[protein] + ATP = O-phospho-L-seryl-[protein] + ADP + H(+). It catalyses the reaction L-threonyl-[protein] + ATP = O-phospho-L-threonyl-[protein] + ADP + H(+). The enzyme catalyses L-tyrosyl-[protein] + ATP = O-phospho-L-tyrosyl-[protein] + ADP + H(+). It carries out the reaction [DNA-directed RNA polymerase] + ATP = phospho-[DNA-directed RNA polymerase] + ADP + H(+). Its function is as follows. Dual-specificity kinase which possesses both serine/threonine and tyrosine kinase activities. Exhibits a substrate preference for proline at position P+1 and arginine at position P-3. Plays an important role in double-strand breaks (DSBs) repair following DNA damage. Mechanistically, phosphorylates RNF169 and increases its ability to block accumulation of TP53BP1 at the DSB sites thereby promoting homologous recombination repair (HRR). Also acts as a positive regulator of transcription by acting as a CTD kinase that mediates phosphorylation of the CTD (C-terminal domain) of the large subunit of RNA polymerase II (RNAP II) POLR2A. Modulates alternative splicing by phosphorylating the splice factor SRSF6. Phosphorylates SEPTIN4, SEPTIN5 and SF3B1. In Xenopus tropicalis (Western clawed frog), this protein is Dual specificity tyrosine-phosphorylation-regulated kinase 1A.